The following is a 343-amino-acid chain: Ion-translocating oxidoreductase complex subunit D (343 aa).

4 helical membrane-spanning segments follow: residues 24 to 44, 45 to 65, 69 to 91, and 124 to 144; these read VLLA…AGTL, YNLA…LAAR, LAFF…ALPP, and AMLG…SWPA. Residue T171 is modified to FMN phosphoryl threonine. 5 helical membrane passes run 197-217, 221-241, 251-271, 284-304, and 305-325; these read FGGA…LYLL, LITW…SLLF, GSPL…FIVT, LVFG…GGYP, and DAVA…DYYT.

Belongs to the NqrB/RnfD family. In terms of assembly, the complex is composed of six subunits: RnfA, RnfB, RnfC, RnfD, RnfE and RnfG. Requires FMN as cofactor.

It localises to the cell inner membrane. Part of a membrane-bound complex that couples electron transfer with translocation of ions across the membrane. The protein is Ion-translocating oxidoreductase complex subunit D of Ectopseudomonas mendocina (strain ymp) (Pseudomonas mendocina).